We begin with the raw amino-acid sequence, 160 residues long: SsrA-binding protein (160 aa).

This sequence belongs to the SmpB family.

It is found in the cytoplasm. Functionally, required for rescue of stalled ribosomes mediated by trans-translation. Binds to transfer-messenger RNA (tmRNA), required for stable association of tmRNA with ribosomes. tmRNA and SmpB together mimic tRNA shape, replacing the anticodon stem-loop with SmpB. tmRNA is encoded by the ssrA gene; the 2 termini fold to resemble tRNA(Ala) and it encodes a 'tag peptide', a short internal open reading frame. During trans-translation Ala-aminoacylated tmRNA acts like a tRNA, entering the A-site of stalled ribosomes, displacing the stalled mRNA. The ribosome then switches to translate the ORF on the tmRNA; the nascent peptide is terminated with the 'tag peptide' encoded by the tmRNA and targeted for degradation. The ribosome is freed to recommence translation, which seems to be the essential function of trans-translation. This chain is SsrA-binding protein, found in Escherichia coli O139:H28 (strain E24377A / ETEC).